The sequence spans 623 residues: Leucine aminopeptidase 2 (623 aa).

Residues 140–142 and 266–271 contribute to the a peptide site; these read QLE and PYGGME. A Zn(2+)-binding site is contributed by His295. Glu296 (proton acceptor) is an active-site residue. 2 residues coordinate Zn(2+): His299 and Glu318. The Proton donor role is filled by Tyr382.

This sequence belongs to the peptidase M1 family. The cofactor is Zn(2+).

The protein resides in the cytoplasm. It localises to the nucleus. It carries out the reaction an epoxide + H2O = an ethanediol. In terms of biological role, aminopeptidase that preferentially cleaves di- and tripeptides. Also has low epoxide hydrolase activity (in vitro). Can hydrolyze the epoxide leukotriene LTA(4) but it forms preferentially 5,6-dihydroxy-7,9,11,14-eicosatetraenoic acid rather than the cytokine leukotriene B(4) as the product compared to the homologous mammalian enzyme (in vitro). The sequence is that of Leucine aminopeptidase 2 from Eremothecium gossypii (strain ATCC 10895 / CBS 109.51 / FGSC 9923 / NRRL Y-1056) (Yeast).